Consider the following 610-residue polypeptide: Glutamine--fructose-6-phosphate aminotransferase [isomerizing] (610 aa).

The active-site Nucleophile; for GATase activity is cysteine 2. The region spanning 2 to 218 (CGIVGAVAQR…EGDVAEITRR (217 aa)) is the Glutamine amidotransferase type-2 domain. SIS domains lie at 286-426 (AAEI…QQGR) and 459-600 (LATD…VDQP). The active-site For Fru-6P isomerization activity is lysine 605.

As to quaternary structure, homodimer.

It localises to the cytoplasm. The enzyme catalyses D-fructose 6-phosphate + L-glutamine = D-glucosamine 6-phosphate + L-glutamate. Catalyzes the first step in hexosamine metabolism, converting fructose-6P into glucosamine-6P using glutamine as a nitrogen source. In Vibrio vulnificus (strain CMCP6), this protein is Glutamine--fructose-6-phosphate aminotransferase [isomerizing].